The sequence spans 264 residues: uncharacterized protein (264 aa).

A helical membrane pass occupies residues 7–27; that stretch reads LTLGICLVLLIILIVGYVIMT.

It belongs to the staphylococcal tandem lipoprotein family.

It is found in the cell membrane. This is an uncharacterized protein from Staphylococcus aureus (strain MRSA252).